A 255-amino-acid chain; its full sequence is 1-(5-phosphoribosyl)-5-[(5-phosphoribosylamino)methylideneamino] imidazole-4-carboxamide isomerase (255 aa).

D8 functions as the Proton acceptor in the catalytic mechanism. The Proton donor role is filled by D129.

Belongs to the HisA/HisF family.

The protein resides in the cytoplasm. It carries out the reaction 1-(5-phospho-beta-D-ribosyl)-5-[(5-phospho-beta-D-ribosylamino)methylideneamino]imidazole-4-carboxamide = 5-[(5-phospho-1-deoxy-D-ribulos-1-ylimino)methylamino]-1-(5-phospho-beta-D-ribosyl)imidazole-4-carboxamide. The protein operates within amino-acid biosynthesis; L-histidine biosynthesis; L-histidine from 5-phospho-alpha-D-ribose 1-diphosphate: step 4/9. The protein is 1-(5-phosphoribosyl)-5-[(5-phosphoribosylamino)methylideneamino] imidazole-4-carboxamide isomerase of Prochlorococcus marinus (strain MIT 9313).